Consider the following 196-residue polypeptide: MKKVLVLLSSPVAKENSYSTYFATKFVEEYQKINQEDEIKIIDLNSFDVSQKTLTSGNFATFFNENDSDALINELKSVDKLIVASPMINFNVPATLKNYLDHICVANKTFSYKYKAKGASIGLLDHLKVQIITSQGAPSGWYSFSSHTKYLEGLFNFLGIEIAPSIEITGTKVDPKPKEELYLEFEQEIIKKASEF.

FMN contacts are provided by residues serine 10 and 17 to 19; that span reads SYS.

It belongs to the azoreductase type 1 family. As to quaternary structure, homodimer. FMN is required as a cofactor.

It carries out the reaction 2 a quinone + NADH + H(+) = 2 a 1,4-benzosemiquinone + NAD(+). The enzyme catalyses N,N-dimethyl-1,4-phenylenediamine + anthranilate + 2 NAD(+) = 2-(4-dimethylaminophenyl)diazenylbenzoate + 2 NADH + 2 H(+). Quinone reductase that provides resistance to thiol-specific stress caused by electrophilic quinones. In terms of biological role, also exhibits azoreductase activity. Catalyzes the reductive cleavage of the azo bond in aromatic azo compounds to the corresponding amines. The polypeptide is FMN-dependent NADH:quinone oxidoreductase (Metamycoplasma arthritidis (strain 158L3-1) (Mycoplasma arthritidis)).